A 410-amino-acid polypeptide reads, in one-letter code: Cysteine desulfurase IscS (410 aa).

Pyridoxal 5'-phosphate is bound by residues 80–81 (AT), Asn-160, Gln-188, and 208–210 (SGH). Lys-211 carries the N6-(pyridoxal phosphate)lysine modification. Thr-248 lines the pyridoxal 5'-phosphate pocket. The active-site Cysteine persulfide intermediate is the Cys-334. Cys-334 lines the [2Fe-2S] cluster pocket.

This sequence belongs to the class-V pyridoxal-phosphate-dependent aminotransferase family. NifS/IscS subfamily. As to quaternary structure, homodimer. Forms a heterotetramer with IscU, interacts with other sulfur acceptors. Pyridoxal 5'-phosphate serves as cofactor.

It localises to the cytoplasm. The enzyme catalyses (sulfur carrier)-H + L-cysteine = (sulfur carrier)-SH + L-alanine. Its pathway is cofactor biosynthesis; iron-sulfur cluster biosynthesis. Master enzyme that delivers sulfur to a number of partners involved in Fe-S cluster assembly, tRNA modification or cofactor biosynthesis. Catalyzes the removal of elemental sulfur atoms from cysteine to produce alanine. Functions as a sulfur delivery protein for Fe-S cluster synthesis onto IscU, an Fe-S scaffold assembly protein, as well as other S acceptor proteins. The chain is Cysteine desulfurase IscS from Rickettsia africae (strain ESF-5).